Reading from the N-terminus, the 117-residue chain is Galanin peptides (117 aa).

The N-terminal stretch at 1–19 (MQRCAGFLFLSLILCAALS) is a signal peptide. Positions 20 to 30 (ETFGLVLSAKE) are excised as a propeptide. Threonine amide is present on Thr61.

This sequence belongs to the galanin family.

The protein resides in the secreted. Endocrine hormone of the central and peripheral nervous systems that binds and activates the G protein-coupled receptors GALR1, GALR2, and GALR3. This small neuropeptide may regulate diverse physiologic functions including contraction of smooth muscle of the gastrointestinal and genitourinary tract, growth hormone and insulin release and adrenal secretion. This chain is Galanin peptides (GAL), found in Coturnix japonica (Japanese quail).